The primary structure comprises 182 residues: MHILGIDPGLQITGFGVVDMDGPHLRYVASGTIKTTHLDTKDLPGRLKVLFDGVREVVQRYQPEVASVEIVFVNVNPQATLLLGQARGACITALVSSDLAVAEYTALQMKKAVAGYGKAGKAEVQQMVMRLLKLPSLPGKDAADALGLAITHAHVGTAMARLALASEAGGKMDGNYRAGRSR.

Active-site residues include Asp7, Glu69, and Asp141. Residues Asp7, Glu69, and Asp141 each coordinate Mg(2+).

This sequence belongs to the RuvC family. Homodimer which binds Holliday junction (HJ) DNA. The HJ becomes 2-fold symmetrical on binding to RuvC with unstacked arms; it has a different conformation from HJ DNA in complex with RuvA. In the full resolvosome a probable DNA-RuvA(4)-RuvB(12)-RuvC(2) complex forms which resolves the HJ. Mg(2+) serves as cofactor.

It localises to the cytoplasm. It catalyses the reaction Endonucleolytic cleavage at a junction such as a reciprocal single-stranded crossover between two homologous DNA duplexes (Holliday junction).. The RuvA-RuvB-RuvC complex processes Holliday junction (HJ) DNA during genetic recombination and DNA repair. Endonuclease that resolves HJ intermediates. Cleaves cruciform DNA by making single-stranded nicks across the HJ at symmetrical positions within the homologous arms, yielding a 5'-phosphate and a 3'-hydroxyl group; requires a central core of homology in the junction. The consensus cleavage sequence is 5'-(A/T)TT(C/G)-3'. Cleavage occurs on the 3'-side of the TT dinucleotide at the point of strand exchange. HJ branch migration catalyzed by RuvA-RuvB allows RuvC to scan DNA until it finds its consensus sequence, where it cleaves and resolves the cruciform DNA. The protein is Crossover junction endodeoxyribonuclease RuvC of Polaromonas naphthalenivorans (strain CJ2).